A 174-amino-acid chain; its full sequence is U1 small nuclear ribonucleoprotein C (174 aa).

The Matrin-type zinc finger occupies 4-36 (YYCDYCDKYLTHDSPSVRKSHTVGKQHKLAVQL). Composition is skewed to low complexity over residues 82 to 109 (QQQQ…QQGM) and 122 to 140 (PHQF…FQPP). Positions 82–174 (QQQQQQQQQQ…QHNQPTIPGL (93 aa)) are disordered. Positions 141 to 163 (HHQHHPHQQHQQHQQHQHQHQHQ) are enriched in basic residues. Residues 164–174 (QQHNQPTIPGL) show a composition bias toward low complexity.

It belongs to the U1 small nuclear ribonucleoprotein C family. As to quaternary structure, component of the U1 snRNP. The U1 snRNP is composed of the U1 snRNA and the 7 core Sm proteins SNRPB, SNRPD1, SNRPD2, SNRPD3, SNRPE, SNRPF and SNRPG that assemble in a heptameric protein ring on the Sm site of the small nuclear RNA to form the core snRNP, and at least 3 U1 snRNP-specific proteins SNRNP70/U1-70K, SNRPA/U1-A and SNRPC/U1-C. SNRPC/U1-C interacts with U1 snRNA and the 5' splice-site region of the pre-mRNA.

It is found in the nucleus. In terms of biological role, component of the spliceosomal U1 snRNP, which is essential for recognition of the pre-mRNA 5' splice-site and the subsequent assembly of the spliceosome. SNRPC/U1-C is directly involved in initial 5' splice-site recognition for both constitutive and regulated alternative splicing. The interaction with the 5' splice-site seems to precede base-pairing between the pre-mRNA and the U1 snRNA. Stimulates commitment or early (E) complex formation by stabilizing the base pairing of the 5' end of the U1 snRNA and the 5' splice-site region. The sequence is that of U1 small nuclear ribonucleoprotein C from Dictyostelium discoideum (Social amoeba).